We begin with the raw amino-acid sequence, 338 residues long: Ketol-acid reductoisomerase (NADP(+)) (338 aa).

Residues 1–181 (MKVFYDKDCD…GGGKAGIIET (181 aa)) form the KARI N-terminal Rossmann domain. NADP(+) is bound by residues 24–27 (YGSQ), R47, and S52. H107 is an active-site residue. G133 contacts NADP(+). Residues 182–327 (NFREETETDL…EKLRAMMPWI (146 aa)) form the KARI C-terminal knotted domain. D190, E194, E226, and E230 together coordinate Mg(2+). S251 serves as a coordination point for substrate.

Belongs to the ketol-acid reductoisomerase family. Mg(2+) serves as cofactor.

The enzyme catalyses (2R)-2,3-dihydroxy-3-methylbutanoate + NADP(+) = (2S)-2-acetolactate + NADPH + H(+). It carries out the reaction (2R,3R)-2,3-dihydroxy-3-methylpentanoate + NADP(+) = (S)-2-ethyl-2-hydroxy-3-oxobutanoate + NADPH + H(+). It participates in amino-acid biosynthesis; L-isoleucine biosynthesis; L-isoleucine from 2-oxobutanoate: step 2/4. The protein operates within amino-acid biosynthesis; L-valine biosynthesis; L-valine from pyruvate: step 2/4. Functionally, involved in the biosynthesis of branched-chain amino acids (BCAA). Catalyzes an alkyl-migration followed by a ketol-acid reduction of (S)-2-acetolactate (S2AL) to yield (R)-2,3-dihydroxy-isovalerate. In the isomerase reaction, S2AL is rearranged via a Mg-dependent methyl migration to produce 3-hydroxy-3-methyl-2-ketobutyrate (HMKB). In the reductase reaction, this 2-ketoacid undergoes a metal-dependent reduction by NADPH to yield (R)-2,3-dihydroxy-isovalerate. In Polaromonas sp. (strain JS666 / ATCC BAA-500), this protein is Ketol-acid reductoisomerase (NADP(+)).